The primary structure comprises 704 residues: Phytyl ester synthase 1, chloroplastic (704 aa).

The N-terminal 27 residues, 1 to 27 (MATCSSSLLVLPNLRLSSNQRRNFKVR), are a transit peptide targeting the chloroplast.

It belongs to the diacylglycerol acyltransferase family. Interacts with PGM48. Mostly expressed in flowers (e.g. sepals, petals and stamen).

The protein localises to the plastid. It is found in the chloroplast. The protein resides in the plastoglobule. The catalysed reaction is a 1,2-diacyl-3-O-(beta-D-galactosyl)-sn-glycerol + a 1,2-diacylglycerol = an acyl-3-O-(beta-D-galactosyl)-sn-glycerol + a triacylglycerol. It carries out the reaction a 1,2-diacylglycerol + a fatty acyl-CoA = a triacylglycerol + CoA. The enzyme catalyses a fatty acyl-[ACP] + a 1,2-diacylglycerol = a triacylglycerol + holo-[ACP]. It catalyses the reaction phytol + a fatty acyl-CoA = a fatty acid phytyl ester + CoA. The catalysed reaction is phytol + tetradecanoyl-CoA = tetradecanoate phytyl ester + CoA. It carries out the reaction a 1,3-diacylglycerol + a fatty acyl-CoA = a triacylglycerol + CoA. The enzyme catalyses 1,2-dihexanoylglycerol + tetradecanoyl-CoA = 1,2-dihexanoyl-3-tetradecanoylglycerol + CoA. It catalyses the reaction 1,2-dihexanoylglycerol + hexadecanoyl-CoA = 1,2-dihexanoyl-3-hexadecanoylglycerol + CoA. The catalysed reaction is 1,2-dihexanoylglycerol + octadecanoyl-CoA = 1,2-dihexanoyl-3-octadecanoylglycerol + CoA. It carries out the reaction (7Z,10Z,13Z)-hexadecatrienoyl-CoA + 1,2-dihexanoylglycerol = 1,2-dihexanoyl-3-(7Z,10Z,13Z-hexadecatrienoyl)-glycerol + CoA. The enzyme catalyses 1,2-dihexanoylglycerol + (9Z)-octadecenoyl-CoA = 1,2-dihexanoyl-3-(9Z-octadecenoyl)-glycerol + CoA. It catalyses the reaction 1,2-dihexanoylglycerol + (9Z,12Z,15Z)-octadecatrienoyl-CoA = 1,2-dihexanoyl-3-(9Z,12Z,15Z-octadecatrienoyl)-glycerol + CoA. The catalysed reaction is phytol + decanoyl-CoA = decanoate phytyl ester + CoA. It carries out the reaction (7Z,10Z,13Z)-hexadecatrienoyl-CoA + phytol = (7Z,10Z,13Z)-hexadecatrienoate phytyl ester + CoA. The enzyme catalyses phytol + dodecanoyl-CoA = dodecanoate phytyl ester + CoA. Its function is as follows. Acyltransferase involved in fatty acid phytyl ester synthesis in chloroplasts, a process required for the maintenance of the photosynthetic membrane integrity during abiotic stress and senescence. Exhibits phytyl ester synthesis and diacylglycerol acyltransferase activities with broad substrate specificities, and can employ acyl-CoAs, acyl carrier proteins, and galactolipids as acyl donors. The protein is Phytyl ester synthase 1, chloroplastic of Arabidopsis thaliana (Mouse-ear cress).